A 401-amino-acid chain; its full sequence is Formate-dependent phosphoribosylglycinamide formyltransferase (401 aa).

Residues 22–23 and glutamate 82 each bind N(1)-(5-phospho-beta-D-ribosyl)glycinamide; that span reads EL. ATP contacts are provided by residues arginine 115, lysine 157, 162–167, 197–200, and glutamate 205; these read SSGKGQ and EGFI. The ATP-grasp domain occupies 120 to 315; sequence RLAAETLGLP…EFELHARAIL (196 aa). Glutamate 274 and glutamate 286 together coordinate Mg(2+). N(1)-(5-phospho-beta-D-ribosyl)glycinamide contacts are provided by residues aspartate 293, lysine 362, and 369–370; that span reads RR.

The protein belongs to the PurK/PurT family. In terms of assembly, homodimer.

It catalyses the reaction N(1)-(5-phospho-beta-D-ribosyl)glycinamide + formate + ATP = N(2)-formyl-N(1)-(5-phospho-beta-D-ribosyl)glycinamide + ADP + phosphate + H(+). The protein operates within purine metabolism; IMP biosynthesis via de novo pathway; N(2)-formyl-N(1)-(5-phospho-D-ribosyl)glycinamide from N(1)-(5-phospho-D-ribosyl)glycinamide (formate route): step 1/1. In terms of biological role, involved in the de novo purine biosynthesis. Catalyzes the transfer of formate to 5-phospho-ribosyl-glycinamide (GAR), producing 5-phospho-ribosyl-N-formylglycinamide (FGAR). Formate is provided by PurU via hydrolysis of 10-formyl-tetrahydrofolate. The sequence is that of Formate-dependent phosphoribosylglycinamide formyltransferase from Cupriavidus pinatubonensis (strain JMP 134 / LMG 1197) (Cupriavidus necator (strain JMP 134)).